Reading from the N-terminus, the 173-residue chain is Co-chaperone protein HscB homolog (173 aa).

A J domain is found at Cys-5–Met-77.

This sequence belongs to the HscB family. Interacts with HscA and stimulates its ATPase activity.

Co-chaperone involved in the maturation of iron-sulfur cluster-containing proteins. Seems to help targeting proteins to be folded toward HscA. The protein is Co-chaperone protein HscB homolog of Pseudomonas fluorescens (strain SBW25).